The primary structure comprises 427 residues: Adenylosuccinate synthetase (427 aa).

Residues 12–18 (GDEGKGK) and 40–42 (GHT) contribute to the GTP site. Residue Asp-13 is the Proton acceptor of the active site. The Mg(2+) site is built by Asp-13 and Gly-40. Residues 13 to 16 (DEGK), 38 to 41 (NAGH), Thr-128, Arg-142, Gln-223, Thr-238, and Arg-302 each bind IMP. His-41 serves as the catalytic Proton donor. 298-304 (TTTGRAR) serves as a coordination point for substrate. GTP contacts are provided by residues Arg-304, 330-332 (KLD), and 412-414 (AVG).

Belongs to the adenylosuccinate synthetase family. Homodimer. It depends on Mg(2+) as a cofactor.

The protein resides in the cytoplasm. It catalyses the reaction IMP + L-aspartate + GTP = N(6)-(1,2-dicarboxyethyl)-AMP + GDP + phosphate + 2 H(+). The protein operates within purine metabolism; AMP biosynthesis via de novo pathway; AMP from IMP: step 1/2. Functionally, plays an important role in the de novo pathway of purine nucleotide biosynthesis. Catalyzes the first committed step in the biosynthesis of AMP from IMP. The protein is Adenylosuccinate synthetase of Desulfitobacterium hafniense (strain Y51).